The sequence spans 242 residues: Myogenic factor 6 (242 aa).

The segment at 31–63 (SPLYPGSDGTLSPCQDQMPPEAGSDSSGEEHVL) is disordered. The bHLH domain maps to 93–144 (DRRKAATLRERRRLKKINEAFEALKRRTVANPNQRLPKVEILRSAINYIERL).

In terms of assembly, efficient DNA binding requires dimerization with another bHLH protein. Interacts with CSRP3.

The protein localises to the nucleus. In terms of biological role, involved in muscle differentiation (myogenic factor). Induces fibroblasts to differentiate into myoblasts. Probable sequence specific DNA-binding protein. In Bos taurus (Bovine), this protein is Myogenic factor 6 (MYF6).